The chain runs to 1005 residues: Translation initiation factor IF-2 (1005 aa).

Disordered regions lie at residues 54–337 (KYVP…RRPQ) and 368–414 (PKPK…PTSV). Residues 58–73 (SPSTHSMPPTRPTSHS) show a composition bias toward polar residues. Pro residues predominate over residues 75-86 (PLPPQPGKPQPK). Polar residues predominate over residues 146 to 157 (GSNSPSHSESTP). 2 stretches are compositionally biased toward low complexity: residues 189–198 (PSPAAMAGRA) and 222–240 (VESA…PRAE). Residues 258 to 274 (PRSETSEDGARRGEKLV) are compositionally biased toward basic and acidic residues. Positions 392 to 401 (GGRKLSRRDR) are enriched in basic residues. The tr-type G domain maps to 495-668 (RRPPVVTIMG…LLVSEVEDLY (174 aa)). Residues 504–511 (GHVDHGKT) are G1. 504 to 511 (GHVDHGKT) contacts GTP. The interval 529–533 (GITQH) is G2. A G3 region spans residues 554–557 (DTPG). GTP contacts are provided by residues 554 to 558 (DTPGH) and 608 to 611 (NKID). The G4 stretch occupies residues 608 to 611 (NKID). The tract at residues 644–646 (SAI) is G5.

This sequence belongs to the TRAFAC class translation factor GTPase superfamily. Classic translation factor GTPase family. IF-2 subfamily.

Its subcellular location is the cytoplasm. In terms of biological role, one of the essential components for the initiation of protein synthesis. Protects formylmethionyl-tRNA from spontaneous hydrolysis and promotes its binding to the 30S ribosomal subunits. Also involved in the hydrolysis of GTP during the formation of the 70S ribosomal complex. The polypeptide is Translation initiation factor IF-2 (Cyanothece sp. (strain PCC 7425 / ATCC 29141)).